The following is a 401-amino-acid chain: tRNA(Ile)-lysidine synthase (401 aa).

17–22 (SGGPDS) contributes to the ATP binding site.

It belongs to the tRNA(Ile)-lysidine synthase family.

It is found in the cytoplasm. It carries out the reaction cytidine(34) in tRNA(Ile2) + L-lysine + ATP = lysidine(34) in tRNA(Ile2) + AMP + diphosphate + H(+). Functionally, ligates lysine onto the cytidine present at position 34 of the AUA codon-specific tRNA(Ile) that contains the anticodon CAU, in an ATP-dependent manner. Cytidine is converted to lysidine, thus changing the amino acid specificity of the tRNA from methionine to isoleucine. This is tRNA(Ile)-lysidine synthase from Mycoplasma mycoides subsp. mycoides SC (strain CCUG 32753 / NCTC 10114 / PG1).